Reading from the N-terminus, the 66-residue chain is Beta-toxin Ct71 (66 aa).

Residues 1–66 form the LCN-type CS-alpha/beta domain; that stretch reads KEGYIVNYHD…VWPLPKKTCN (66 aa). Intrachain disulfides connect cysteine 12/cysteine 65, cysteine 16/cysteine 41, cysteine 25/cysteine 46, and cysteine 29/cysteine 48. Asparagine 66 carries the asparagine amide modification.

This sequence belongs to the long (4 C-C) scorpion toxin superfamily. Sodium channel inhibitor family. Beta subfamily. Expressed by the venom gland.

It is found in the secreted. Its function is as follows. Beta toxins bind voltage-independently at site-4 of sodium channels (Nav) and shift the voltage of activation toward more negative potentials thereby affecting sodium channel activation and promoting spontaneous and repetitive firing. Lethal to mice. The chain is Beta-toxin Ct71 from Centruroides tecomanus (Scorpion).